Here is a 443-residue protein sequence, read N- to C-terminus: Glutamate--tRNA ligase 2 (443 aa).

The short motif at 7 to 17 is the 'HIGH' region element; sequence PSPTGLIHVGN. The 'KMSKS' region signature appears at 240-244; it reads KLSKR. ATP is bound at residue Lys243.

Belongs to the class-I aminoacyl-tRNA synthetase family. Glutamate--tRNA ligase type 1 subfamily. In terms of assembly, monomer.

The protein resides in the cytoplasm. It catalyses the reaction tRNA(Glu) + L-glutamate + ATP = L-glutamyl-tRNA(Glu) + AMP + diphosphate. Functionally, catalyzes the attachment of glutamate to tRNA(Glu) in a two-step reaction: glutamate is first activated by ATP to form Glu-AMP and then transferred to the acceptor end of tRNA(Glu). This chain is Glutamate--tRNA ligase 2, found in Gluconacetobacter diazotrophicus (strain ATCC 49037 / DSM 5601 / CCUG 37298 / CIP 103539 / LMG 7603 / PAl5).